Here is a 180-residue protein sequence, read N- to C-terminus: Methionine-R-sulfoxide reductase B2, mitochondrial (180 aa).

The N-terminal 41 residues, 1 to 41 (MSRFLVRLSTVVSKGATGKSVLPQKRIFAGIRLISSSTGLQ), are a transit peptide targeting the mitochondrion. One can recognise a MsrB domain in the interval 49 to 178 (STDWQRKLSP…NSVALNFKPR (130 aa)). Zn(2+)-binding residues include Cys-88, Cys-91, Cys-144, and Cys-147. The active-site Nucleophile is the Cys-167.

Belongs to the MsrB Met sulfoxide reductase family. The cofactor is Zn(2+).

The protein resides in the mitochondrion. The catalysed reaction is L-methionyl-[protein] + [thioredoxin]-disulfide + H2O = L-methionyl-(R)-S-oxide-[protein] + [thioredoxin]-dithiol. It carries out the reaction [thioredoxin]-disulfide + L-methionine + H2O = L-methionine (R)-S-oxide + [thioredoxin]-dithiol. Methionine-sulfoxide reductase that specifically reduces methionine (R)-sulfoxide back to methionine. While in many cases, methionine oxidation is the result of random oxidation following oxidative stress, methionine oxidation is also a post-translational modification that takes place on specific residue. Upon oxidative stress, may play a role in the preservation of mitochondrial integrity by decreasing the intracellular reactive oxygen species build-up through its scavenging role, hence contributing to cell survival and protein maintenance. The protein is Methionine-R-sulfoxide reductase B2, mitochondrial (msrb2) of Danio rerio (Zebrafish).